A 370-amino-acid polypeptide reads, in one-letter code: Molybdenum import ATP-binding protein ModC (370 aa).

The 232-residue stretch at 2–233 (SVRVDIGHRL…LDLLPAEERG (232 aa)) folds into the ABC transporter domain. 31–38 (GPSGSGKT) lines the ATP pocket. Positions 293–359 (GLSALNILPG…VKTVSFDRAN (67 aa)) constitute a Mop domain.

Belongs to the ABC transporter superfamily. Molybdate importer (TC 3.A.1.8) family. As to quaternary structure, the complex is composed of two ATP-binding proteins (ModC), two transmembrane proteins (ModB) and a solute-binding protein (ModA).

It is found in the cell inner membrane. It carries out the reaction molybdate(out) + ATP + H2O = molybdate(in) + ADP + phosphate + H(+). Part of the ABC transporter complex ModABC involved in molybdenum import. Responsible for energy coupling to the transport system. In Mesorhizobium japonicum (strain LMG 29417 / CECT 9101 / MAFF 303099) (Mesorhizobium loti (strain MAFF 303099)), this protein is Molybdenum import ATP-binding protein ModC.